A 334-amino-acid polypeptide reads, in one-letter code: Cytosolic Fe-S cluster assembly factor NBP35 (334 aa).

Residues cysteine 33, cysteine 47, cysteine 50, and cysteine 56 each contribute to the [4Fe-4S] cluster site. 86 to 93 (GKGGVGKS) contributes to the ATP binding site. Positions 259 and 262 each coordinate [4Fe-4S] cluster.

This sequence belongs to the Mrp/NBP35 ATP-binding proteins family. NUBP1/NBP35 subfamily. As to quaternary structure, heterotetramer of 2 NBP35 and 2 CFD1 chains. It depends on [4Fe-4S] cluster as a cofactor.

The protein localises to the cytoplasm. The protein resides in the nucleus. Its function is as follows. Component of the cytosolic iron-sulfur (Fe/S) protein assembly (CIA) machinery. Required for maturation of extramitochondrial Fe-S proteins. The NBP35-CFD1 heterotetramer forms a Fe-S scaffold complex, mediating the de novo assembly of an Fe-S cluster and its transfer to target apoproteins. Required for biogenesis and export of both ribosomal subunits, which may reflect a role in assembly of the Fe/S clusters in RLI1, a protein which performs rRNA processing and ribosome export. The sequence is that of Cytosolic Fe-S cluster assembly factor NBP35 from Candida glabrata (strain ATCC 2001 / BCRC 20586 / JCM 3761 / NBRC 0622 / NRRL Y-65 / CBS 138) (Yeast).